We begin with the raw amino-acid sequence, 355 residues long: C-C chemokine receptor type 1 (355 aa).

The Extracellular portion of the chain corresponds to M1–A34. The chain crosses the membrane as a helical span at residues Q35 to V60. Residues Q61–R64 are Cytoplasmic-facing. Residues L65–I91 traverse the membrane as a helical segment. Topologically, residues Y92–K107 are extracellular. C106 and C183 are oxidised to a cystine. Residues I108–I129 traverse the membrane as a helical segment. Over D130–T146 the chain is Cytoplasmic. Residues V147–F171 form a helical membrane-spanning segment. The Extracellular segment spans residues S172–L197. A helical membrane pass occupies residues F198–I223. Over K224–R239 the chain is Cytoplasmic. The chain crosses the membrane as a helical span at residues L240–F264. Topologically, residues Q265–L281 are extracellular. A helical membrane pass occupies residues A282–G305. Residues E306–L355 lie on the Cytoplasmic side of the membrane.

This sequence belongs to the G-protein coupled receptor 1 family. Interacts with CREB3. Interacts with CCL3. Interacts with CCL15. Interacts with CCL23. Interacts with GNAI1. Interacts with PF4/CXCL4.

Its subcellular location is the cell membrane. Functionally, chemokine receptor that plays a crucial role in regulating immune cell migration, inflammation, and immune responses. Contributes to the inflammatory response by recruiting immune cells, such as monocytes, macrophages, T-cells, and dendritic cells, to sites of inflammation for the clearance of pathogens and the resolution of tissue damage. When activated by its ligands including CCL3, CCL5-9, CCL13-16 and CCL23, triggers a signaling cascade within immune cells, leading to their migration towards the source of the chemokine. For example, mediates neutrophil migration after activation by CCL3 leading to the sequential release of TNF-alpha and leukotriene B4. Also mediates monocyte migration upon CXCL4 binding. Activation by CCL5 results in neuroinflammation through the ERK1/2 signaling pathway. The sequence is that of C-C chemokine receptor type 1 (CCR1) from Macaca fascicularis (Crab-eating macaque).